Here is a 369-residue protein sequence, read N- to C-terminus: Anhydro-N-acetylmuramic acid kinase (369 aa).

Residue 12–19 (GTSLDGVD) participates in ATP binding.

This sequence belongs to the anhydro-N-acetylmuramic acid kinase family.

It carries out the reaction 1,6-anhydro-N-acetyl-beta-muramate + ATP + H2O = N-acetyl-D-muramate 6-phosphate + ADP + H(+). Its pathway is amino-sugar metabolism; 1,6-anhydro-N-acetylmuramate degradation. The protein operates within cell wall biogenesis; peptidoglycan recycling. Its function is as follows. Catalyzes the specific phosphorylation of 1,6-anhydro-N-acetylmuramic acid (anhMurNAc) with the simultaneous cleavage of the 1,6-anhydro ring, generating MurNAc-6-P. Is required for the utilization of anhMurNAc either imported from the medium or derived from its own cell wall murein, and thus plays a role in cell wall recycling. This is Anhydro-N-acetylmuramic acid kinase from Actinobacillus pleuropneumoniae serotype 5b (strain L20).